A 348-amino-acid polypeptide reads, in one-letter code: Dihydroorotase (348 aa).

Positions 17 and 19 each coordinate Zn(2+). Substrate is bound by residues 19-21 (HLR) and asparagine 45. Zn(2+)-binding residues include lysine 103, histidine 140, and histidine 178. Lysine 103 bears the N6-carboxylysine mark. Residue histidine 140 coordinates substrate. Leucine 223 contributes to the substrate binding site. Aspartate 251 is a Zn(2+) binding site. The active site involves aspartate 251. Residues histidine 255 and alanine 267 each contribute to the substrate site.

Belongs to the metallo-dependent hydrolases superfamily. DHOase family. Class II DHOase subfamily. Homodimer. Requires Zn(2+) as cofactor.

The catalysed reaction is (S)-dihydroorotate + H2O = N-carbamoyl-L-aspartate + H(+). Its pathway is pyrimidine metabolism; UMP biosynthesis via de novo pathway; (S)-dihydroorotate from bicarbonate: step 3/3. Its function is as follows. Catalyzes the reversible cyclization of carbamoyl aspartate to dihydroorotate. The protein is Dihydroorotase of Yersinia pestis.